Here is a 287-residue protein sequence, read N- to C-terminus: Xyloglucan endotransglucosylase protein 1 (287 aa).

The signal sequence occupies residues Met-1 to Gly-28. In terms of domain architecture, GH16 spans Gly-29–Tyr-219. Residue Glu-105 is the Nucleophile of the active site. Glu-109 functions as the Proton donor in the catalytic mechanism. Glu-109 contributes to the xyloglucan binding site. N-linked (GlcNAc...) asparagine glycosylation is present at Asn-113. Xyloglucan contacts are provided by residues His-122–Asn-124, Asn-132–Glu-134, Asp-198–Trp-199, and Gly-203. 2 disulfide bridges follow: Cys-227–Cys-231 and Cys-266–Cys-280. Arg-271 is a binding site for xyloglucan.

Belongs to the glycosyl hydrolase 16 family. XTH group 2 subfamily. Contains at least one intrachain disulfide bond essential for its enzymatic activity. As to expression, expressed in fruit pulp. Expressed in leaves, flowers, calyces, stems and fruits. Highest expression in leaves and lowest in fruits.

Its subcellular location is the secreted. The protein resides in the cell wall. It is found in the extracellular space. The protein localises to the apoplast. The catalysed reaction is breaks a beta-(1-&gt;4) bond in the backbone of a xyloglucan and transfers the xyloglucanyl segment on to O-4 of the non-reducing terminal glucose residue of an acceptor, which can be a xyloglucan or an oligosaccharide of xyloglucan.. Functionally, catalyzes xyloglucan endotransglycosylation (XET). Cleaves and religates xyloglucan polymers. Does not catalyze xyloglucan endohydrolysis (XEH). Overexpression in Arabidopsis transgenic plants results in elevated tolerance to abiotic stress, such as salt, ABA (abscisic acid) and drought stresses, and in the production of wider leaves. Overexpression in transgenic tomato plants slows down fruit ripening and softening, and the plants produce larger fruits. Both transgenic plants have larger and more irregular cells. Moreover, the fruits of the transgenic tomato have higher density of cell wall and intercellular spaces. May provide cells with more strength and thickness to maintain structural integrity. Probably involved in cell wall assembly and synthesis in fast growing tissues and in the maintenance of firmness in mature fruits. The polypeptide is Xyloglucan endotransglucosylase protein 1 (Diospyros kaki (Kaki persimmon)).